The sequence spans 295 residues: Glycine N-methyltransferase (295 aa).

Residues Ser-4 and Tyr-6 each contribute to the (6S)-5-methyl-5,6,7,8-tetrahydrofolate site. Ser-10 is subject to Phosphoserine. Positions 22, 31, 34, and 41 each coordinate S-adenosyl-L-methionine. Tyr-34 carries the phosphotyrosine modification. The residue at position 46 (Lys-46) is an N6-succinyllysine. S-adenosyl-L-methionine is bound by residues Ala-65, 86 to 88, 117 to 118, 139 to 142, and Arg-178; these read DAS, NW, and LGNS. Lys-193, Lys-198, and Lys-203 each carry N6-succinyllysine. His-217 provides a ligand contact to (6S)-5-methyl-5,6,7,8-tetrahydrofolate. An S-adenosyl-L-methionine-binding site is contributed by Tyr-223. Arg-242 lines the (6S)-5-methyl-5,6,7,8-tetrahydrofolate pocket.

The protein belongs to the class I-like SAM-binding methyltransferase superfamily. Glycine N-methyltransferase family. Homotetramer. As to expression, abundant in liver.

It localises to the cytoplasm. It catalyses the reaction glycine + S-adenosyl-L-methionine = sarcosine + S-adenosyl-L-homocysteine + H(+). With respect to regulation, inhibited by 5-methyltetrahydrofolate monoglutamate and by 5-methyltetrahydrofolate pentaglutamate, inhibition is much more effective by the pentaglutamate form than by the monoglutamate form. Two molecules of 5-methyltetrahydrofolate are bound per tetramer. The binding sites are localized between subunits. Inhibitor binding may preclude movements of the polypeptide chain that are necessary for enzyme activity. Functionally, catalyzes the methylation of glycine by using S-adenosylmethionine (AdoMet) to form N-methylglycine (sarcosine) with the concomitant production of S-adenosylhomocysteine (AdoHcy), a reaction regulated by the binding of 5-methyltetrahydrofolate. Plays an important role in the regulation of methyl group metabolism by regulating the ratio between S-adenosyl-L-methionine and S-adenosyl-L-homocysteine. This chain is Glycine N-methyltransferase (GNMT), found in Oryctolagus cuniculus (Rabbit).